A 347-amino-acid chain; its full sequence is Protein-glutamate methylesterase/protein-glutamine glutaminase 3 (347 aa).

Residues 3–120 form the Response regulatory domain; that stretch reads QVFIVDDSAV…KNFLEESEIL (118 aa). D54 carries the 4-aspartylphosphate modification. The CheB-type methylesterase domain maps to 159-347; the sequence is IDTTDKLIAI…SKIVGEVQYF (189 aa). Active-site residues include S171, H197, and D293.

It belongs to the CheB family. In terms of processing, phosphorylated by CheA. Phosphorylation of the N-terminal regulatory domain activates the methylesterase activity.

The protein localises to the cytoplasm. The catalysed reaction is [protein]-L-glutamate 5-O-methyl ester + H2O = L-glutamyl-[protein] + methanol + H(+). The enzyme catalyses L-glutaminyl-[protein] + H2O = L-glutamyl-[protein] + NH4(+). Functionally, involved in chemotaxis. Part of a chemotaxis signal transduction system that modulates chemotaxis in response to various stimuli. Catalyzes the demethylation of specific methylglutamate residues introduced into the chemoreceptors (methyl-accepting chemotaxis proteins or MCP) by CheR. Also mediates the irreversible deamidation of specific glutamine residues to glutamic acid. The polypeptide is Protein-glutamate methylesterase/protein-glutamine glutaminase 3 (Leptospira interrogans serogroup Icterohaemorrhagiae serovar copenhageni (strain Fiocruz L1-130)).